A 522-amino-acid chain; its full sequence is Calcium-dependent protein kinase 14 (522 aa).

2 stretches are compositionally biased toward low complexity: residues methionine 1 to glutamate 12 and serine 19 to alanine 45. The tract at residues methionine 1–glycine 58 is disordered. Glycine 2 carries the N-myristoyl glycine lipid modification. The Protein kinase domain occupies tyrosine 68–isoleucine 326. Residues leucine 74 to threonine 82 and lysine 97 each bind ATP. Catalysis depends on aspartate 192, which acts as the Proton acceptor. Residues alanine 332 to isoleucine 362 are autoinhibitory domain. 4 EF-hand domains span residues glutamate 369 to lysine 404, leucine 405 to methionine 440, aspartate 441 to methionine 476, and glutamate 480 to glutamate 511. Residues aspartate 382, aspartate 384, serine 386, threonine 388, glutamate 393, aspartate 418, aspartate 420, asparagine 422, threonine 424, glutamate 429, aspartate 454, aspartate 456, serine 458, tyrosine 460, glutamate 465, aspartate 489, aspartate 491, aspartate 493, arginine 495, and glutamate 500 each coordinate Ca(2+).

Belongs to the protein kinase superfamily. Ser/Thr protein kinase family. CDPK subfamily.

The protein localises to the membrane. The catalysed reaction is L-seryl-[protein] + ATP = O-phospho-L-seryl-[protein] + ADP + H(+). The enzyme catalyses L-threonyl-[protein] + ATP = O-phospho-L-threonyl-[protein] + ADP + H(+). Its activity is regulated as follows. Activated by calcium. Autophosphorylation may play an important role in the regulation of the kinase activity. May play a role in signal transduction pathways that involve calcium as a second messenger. The polypeptide is Calcium-dependent protein kinase 14 (Oryza sativa subsp. japonica (Rice)).